The primary structure comprises 141 residues: Subtilase cytotoxin subunit B (141 aa).

The first 23 residues, 1–23 (MTIKRFFVCAGIMGCLSLNPAMA), serve as a signal peptide directing secretion. N-glycoloyl-alpha-neuraminate contacts are provided by residues 33-35 (MFS) and glutamine 59. Positions 89 to 94 (YFYTTG) are hydrophobic patch important for binding to SubA. Tyrosine 101 serves as a coordination point for N-glycoloyl-alpha-neuraminate.

As to quaternary structure, forms a complex with SubA with the stoichiometry SubA1:SubB5 (called SubAB5). Each SubB subunit makes different contacts with the single SubA subunit. This subunit alone forms pentamers.

It localises to the secreted. The protein resides in the host cytoplasm. The protein localises to the host cytosol. It is found in the host endoplasmic reticulum lumen. In terms of biological role, receptor-binding subunit of subtilase cytotoxin SubAB5. Required for receptor-binding and thus correct trafficking in the host cell. Has specificity for host glycans terminating in the sialic acid N-glycolyl-alpha-neuraminic acid (Neu5Gc); each subunit in the SubB pentamer binds one Neu5Gc. The protease subunit (SubA) cleaves host BiP/HSPA5, inducing the host endoplasmic reticulum stress response and eventual cell death. Culture supernatant of E.coli expressing both subA and subB are toxic for Vero cells (African green monkey kidney cell line), Chinese hamster ovary cells and Hct-8 cells (human colonic epithelial cell line); the subunits are not toxic individually. Purified SubAB5 is highly toxic, &lt;0.1 pg is able to kill at least 50% of 30'000 Vero cells in a microtiter plate assay after 3 days; no cytotoxicity is seen at 24 hours. Preabsorption with cells expressing a ganglioside GM2 mimic reduced cytotoxicity of SubAB5 by 93% in the Vero cytotoxicity assay. Intraperitoneal injection of 200 ng of purified SubAB5 kills mice; the higher the dose the faster the mice die. Animals injected with purified SubAB5 have microvascular thrombi in the brain and other organs, including the renal tubules and glomeruli. Mice fed E.coli cells expressing cloned SubAB5 experience drastic weight loss and appear ill and lethargic. SubB alone at 2.5 ug/ml causes vacuolation of Vero cells, which requires the V-type ATPase proton pump; treated cells die. Protein synthesis in Vero cells is transiently inhibited by SubAB5; both subunits are required for this effect. Inhibition of protein synthesis is prevented by brefeldin A; cells are arrested in the G1 phase. SubAB5 at 100 ng/ml induced caspase-dependent apoptosis in Vero cells through mitochondrial membrane damage. The protein is Subtilase cytotoxin subunit B of Escherichia coli.